Reading from the N-terminus, the 377-residue chain is Mitogen-activated protein kinase HOG1 (377 aa).

The Protein kinase domain maps to 23–305 (YTELNPVGMG…AVEGLTHPYM (283 aa)). Residues 29–37 (VGMGAFGLV) and lysine 52 contribute to the ATP site. Residue aspartate 144 is the Proton acceptor of the active site. Threonine 174 is modified (phosphothreonine). The TXY motif lies at 174–176 (TGY). Position 176 is a phosphotyrosine (tyrosine 176). The tract at residues 354-377 (NETEGSEQPDSQVEQNNLDSANGA) is disordered. The segment covering 359-377 (SEQPDSQVEQNNLDSANGA) has biased composition (polar residues).

Belongs to the protein kinase superfamily. Ser/Thr protein kinase family. MAP kinase subfamily. HOG1 sub-subfamily. Mg(2+) serves as cofactor. In terms of processing, dually phosphorylated on Thr-174 and Tyr-176, which activates the enzyme. Phosphorylated in response to oxidative and salt stress.

It is found in the cytoplasm. Its subcellular location is the nucleus. It catalyses the reaction L-seryl-[protein] + ATP = O-phospho-L-seryl-[protein] + ADP + H(+). The enzyme catalyses L-threonyl-[protein] + ATP = O-phospho-L-threonyl-[protein] + ADP + H(+). Its activity is regulated as follows. Activated by tyrosine and threonine phosphorylation. Functionally, proline-directed serine/threonine-protein kinase involved in a signal transduction pathway that is activated by changes in the osmolarity of the extracellular environment. Controls osmotic regulation of transcription of target genes. Regulates stress-induced production and accumulation of glycerol and D-arabitol. HOG1 is also involved in virulence, morphogenesis and oxidative stress response especially through its role in chlamydospore formation, an oxygen-dependent morphogenetic program. The sequence is that of Mitogen-activated protein kinase HOG1 (HOG1) from Candida albicans (strain SC5314 / ATCC MYA-2876) (Yeast).